Reading from the N-terminus, the 58-residue chain is T-cell receptor gamma alternate reading frame protein (58 aa).

As to expression, detected at low levels in the ductal cells of the salivary gland but not in the acinar cells (at protein level). Expressed in endometrium (at protein level). Expressed in epithelial cells within the acinar ducts of the prostate.

This chain is T-cell receptor gamma alternate reading frame protein, found in Homo sapiens (Human).